Here is a 251-residue protein sequence, read N- to C-terminus: Triosephosphate isomerase (251 aa).

Substrate is bound at residue 9-11 (NWK). His94 serves as the catalytic Electrophile. The Proton acceptor role is filled by Glu166. Substrate contacts are provided by residues Gly172, Ser211, and 232–233 (GG).

This sequence belongs to the triosephosphate isomerase family. Homodimer.

The protein localises to the cytoplasm. The catalysed reaction is D-glyceraldehyde 3-phosphate = dihydroxyacetone phosphate. It functions in the pathway carbohydrate biosynthesis; gluconeogenesis. Its pathway is carbohydrate degradation; glycolysis; D-glyceraldehyde 3-phosphate from glycerone phosphate: step 1/1. In terms of biological role, involved in the gluconeogenesis. Catalyzes stereospecifically the conversion of dihydroxyacetone phosphate (DHAP) to D-glyceraldehyde-3-phosphate (G3P). The polypeptide is Triosephosphate isomerase (Xanthomonas campestris pv. campestris (strain 8004)).